A 309-amino-acid polypeptide reads, in one-letter code: MSSTQFNKGPSYGLSAEVKNRLQSKYDPQKEAELRSWIEGLTGLSVGPDFQKGLKDGIILCTLMNKLQPGSVPKINRSMQNWHQLENLSNFIKAMVSYGMNPVDLFEANDLFESGNLTQVQVSLLALAGKAKTKGLQSGVDIGVKYSEKQERNFDDATMKAGQCVIGLQMGTNKCASQSGMTAYGTRRHLYDPKNHILPPMDHSTISLQMGTNKCASQVGMTAPGTRRHIYDTKLGTDKCDNSSMSLQMGYTQGANQSGQVFGLGRQIYDPKYCPQGPAADGAPAAAGDGPGPGEPSECPPYYQEEAGY.

Ser-2 is subject to N-acetylserine. N6-acetyllysine is present on residues Lys-8 and Lys-25. The 105-residue stretch at 28–132 folds into the Calponin-homology (CH) domain; sequence PQKEAELRSW…SLLALAGKAK (105 aa). Ser-138 bears the Phosphoserine mark. Calponin-like repeat units lie at residues 166 to 191, 206 to 231, and 245 to 269; these read IGLQ…RHLY, ISLQ…RHIY, and MSLQ…RQIY. Residues 273-309 form a disordered region; it reads YCPQGPAADGAPAAAGDGPGPGEPSECPPYYQEEAGY. The span at 277–288 shows a compositional bias: low complexity; it reads GPAADGAPAAAG.

The protein belongs to the calponin family.

Thin filament-associated protein that is implicated in the regulation and modulation of smooth muscle contraction. It is capable of binding to actin, calmodulin and tropomyosin. The interaction of calponin with actin inhibits the actomyosin Mg-ATPase activity. The chain is Calponin-2 (CNN2) from Bos taurus (Bovine).